The chain runs to 361 residues: tRNA(Ile)-lysidine synthase (361 aa).

S32–S37 contacts ATP.

This sequence belongs to the tRNA(Ile)-lysidine synthase family.

It localises to the cytoplasm. It carries out the reaction cytidine(34) in tRNA(Ile2) + L-lysine + ATP = lysidine(34) in tRNA(Ile2) + AMP + diphosphate + H(+). Ligates lysine onto the cytidine present at position 34 of the AUA codon-specific tRNA(Ile) that contains the anticodon CAU, in an ATP-dependent manner. Cytidine is converted to lysidine, thus changing the amino acid specificity of the tRNA from methionine to isoleucine. This Bradyrhizobium diazoefficiens (strain JCM 10833 / BCRC 13528 / IAM 13628 / NBRC 14792 / USDA 110) protein is tRNA(Ile)-lysidine synthase.